Here is an 82-residue protein sequence, read N- to C-terminus: Spore coat protein T (82 aa).

Positions methionine 1 to arginine 19 are excised as a propeptide.

The protein localises to the spore coat. Functionally, inner spore coat protein which seems to play a role in germination. The chain is Spore coat protein T (cotT) from Bacillus subtilis (strain 168).